A 201-amino-acid chain; its full sequence is Putative manganese efflux pump MntP 2 (201 aa).

6 consecutive transmembrane segments (helical) span residues 3–23 (LISV…VSIT), 39–59 (IGLF…SIGI), 65–85 (IAAL…GKMI), 116–136 (LILL…SFAF), 141–161 (IINT…IGVM), and 176–196 (ILGG…HTNI).

It belongs to the MntP (TC 9.B.29) family.

The protein localises to the cell membrane. Functionally, probably functions as a manganese efflux pump. The sequence is that of Putative manganese efflux pump MntP 2 from Clostridium botulinum (strain Hall / ATCC 3502 / NCTC 13319 / Type A).